The primary structure comprises 308 residues: MRVIFAGTPAVAIPALAAVADSRHELLAVVTRPDAPAGRGRGLSRSPVAAWADEQGVEVLTPARPREPEFLDRLRALAPDCVPVVAYGALVPPVALEIPQHGWVNLHFSLLPAWRGAAPVQHAVLHGDELTGASVFQLEQGLDTGPVYGTLTDEVGPADTSGDLLERLAHSGAGLLTAVLDAIEDGTARAEPQPVDGVSLAPKLTVADARVRWGDPAFAVDRRVRACTPAPGPWTTFRDERVKLGPVTPVADGPELKPGELLVERSRVLAGTATTPVRLGEVRAAGKRAMPASDWARGVRVTVGEVLA.

109–112 (SLLP) serves as a coordination point for (6S)-5,6,7,8-tetrahydrofolate.

This sequence belongs to the Fmt family.

The catalysed reaction is L-methionyl-tRNA(fMet) + (6R)-10-formyltetrahydrofolate = N-formyl-L-methionyl-tRNA(fMet) + (6S)-5,6,7,8-tetrahydrofolate + H(+). Attaches a formyl group to the free amino group of methionyl-tRNA(fMet). The formyl group appears to play a dual role in the initiator identity of N-formylmethionyl-tRNA by promoting its recognition by IF2 and preventing the misappropriation of this tRNA by the elongation apparatus. The sequence is that of Methionyl-tRNA formyltransferase from Salinispora arenicola (strain CNS-205).